Consider the following 825-residue polypeptide: Ubiquitin carboxyl-terminal hydrolase 16 (825 aa).

The interval 1-20 (MGKKRTKGRSAPDTVASESA) is disordered. The segment at 22-141 (PVCRHLRKGL…QVVDYVRKQA (120 aa)) adopts a UBP-type zinc-finger fold. Zn(2+) is bound by residues Cys24, His26, Cys48, Cys51, Cys73, Cys76, Cys81, His89, His93, His102, Cys115, and Cys118. Residue Lys139 forms a Glycyl lysine isopeptide (Lys-Gly) (interchain with G-Cter in SUMO2) linkage. Positions 164-180 (EKESKNEQEREKSENLA) are enriched in basic and acidic residues. The tract at residues 164–184 (EKESKNEQEREKSENLAKETI) is disordered. Ser188 bears the Phosphoserine mark. Residues 195 to 824 (KGLSNLGNTC…QAYLLFYERI (630 aa)) form the USP domain. Cys204 acts as the Nucleophile in catalysis. Residues 393–407 (SGKKSINDKNVKMTM) show a composition bias toward basic and acidic residues. Residues 393–456 (SGKKSINDKN…KQAKNQRRQQ (64 aa)) are disordered. A compositionally biased stretch (acidic residues) spans 408–419 (EEEDKDSEEEKD). A Phosphoserine modification is found at Ser414. Positions 436 to 456 (HLQKKAKKQAKKQAKNQRRQQ) are enriched in basic residues. Phosphoserine is present on residues Ser520 and Ser531. His759 functions as the Proton acceptor in the catalytic mechanism.

Belongs to the peptidase C19 family. USP16 subfamily. Homotetramer. Associates with late pre-40S ribosomes. Interacts with CEP78; promoting deubiquitination of tektins. In terms of processing, phosphorylated at the onset of mitosis and dephosphorylated during the metaphase/anaphase transition. Phosphorylation by AURKB enhances the deubiquitinase activity.

Its subcellular location is the nucleus. It is found in the cytoplasm. The enzyme catalyses Thiol-dependent hydrolysis of ester, thioester, amide, peptide and isopeptide bonds formed by the C-terminal Gly of ubiquitin (a 76-residue protein attached to proteins as an intracellular targeting signal).. Specifically deubiquitinates 'Lys-120' of histone H2A (H2AK119Ub), a specific tag for epigenetic transcriptional repression, thereby acting as a coactivator. Deubiquitination of histone H2A is a prerequisite for subsequent phosphorylation at 'Ser-11' of histone H3 (H3S10ph), and is required for chromosome segregation when cells enter into mitosis. In resting B- and T-lymphocytes, phosphorylation by AURKB leads to enhance its activity, thereby maintaining transcription in resting lymphocytes. Regulates Hox gene expression via histone H2A deubiquitination. Prefers nucleosomal substrates. Does not deubiquitinate histone H2B. Also deubiquitinates non-histone proteins, such as ribosomal protein RPS27A: deubiquitination of monoubiquitinated RPS27A promotes maturation of the 40S ribosomal subunit. Also mediates deubiquitination of tektin proteins (TEKT1, TEKT2, TEK3, TEKT4 and TEKT5), promoting their stability. The chain is Ubiquitin carboxyl-terminal hydrolase 16 (Usp16) from Mus musculus (Mouse).